Reading from the N-terminus, the 283-residue chain is Protein FAM170A (283 aa).

2 disordered regions span residues 1–54 and 123–171; these read MKRR…RSQH and GTPP…AKTP. Residues 127 to 138 are compositionally biased toward polar residues; sequence SDVSTRNLLSDS. Residues 142-153 are compositionally biased toward basic and acidic residues; that stretch reads GEEKEHEERTES. Thr-170 carries the post-translational modification Phosphothreonine. Residues 181 to 205 form a C2H2-type; degenerate zinc finger; sequence FRCMACCRVFTTMEALQEHVQFGIR. The segment at 223–283 is disordered; it reads NMESESTQDE…VFHSPKDRNS (61 aa). Positions 228–246 are enriched in acidic residues; the sequence is STQDEQEEENGNEKEEEEK. Phosphoserine is present on Ser-268.

This sequence belongs to the FAM170 family.

Its subcellular location is the nucleus. Acts as a nuclear transcription factor that positively regulates the expression of heat shock genes. Binds to heat shock promoter elements (HSE). The protein is Protein FAM170A (FAM170A) of Macaca fascicularis (Crab-eating macaque).